We begin with the raw amino-acid sequence, 67 residues long: Vespin (67 aa).

The N-terminal stretch at M1–L21 is a signal peptide.

In terms of tissue distribution, expressed by the venom gland.

Its subcellular location is the secreted. Its function is as follows. Shows contractile activity on isolated ileum smooth muscle. This chain is Vespin, found in Vespa magnifica (Hornet).